The sequence spans 372 residues: 4-hydroxy-3-methylbut-2-en-1-yl diphosphate synthase (flavodoxin) (372 aa).

[4Fe-4S] cluster contacts are provided by Cys270, Cys273, Cys305, and Glu312.

It belongs to the IspG family. Requires [4Fe-4S] cluster as cofactor.

The enzyme catalyses (2E)-4-hydroxy-3-methylbut-2-enyl diphosphate + oxidized [flavodoxin] + H2O + 2 H(+) = 2-C-methyl-D-erythritol 2,4-cyclic diphosphate + reduced [flavodoxin]. Its pathway is isoprenoid biosynthesis; isopentenyl diphosphate biosynthesis via DXP pathway; isopentenyl diphosphate from 1-deoxy-D-xylulose 5-phosphate: step 5/6. Its function is as follows. Converts 2C-methyl-D-erythritol 2,4-cyclodiphosphate (ME-2,4cPP) into 1-hydroxy-2-methyl-2-(E)-butenyl 4-diphosphate. This is 4-hydroxy-3-methylbut-2-en-1-yl diphosphate synthase (flavodoxin) from Vibrio vulnificus (strain CMCP6).